Reading from the N-terminus, the 72-residue chain is Conotoxin Gla(2)-TxVI/B (72 aa).

A signal peptide spans 1-19 (MEKLIILLLVAAVLMSTQA). A propeptide spanning residues 20 to 44 (LFQEKRTMKKIDFLSKGKADAEKQR) is cleaved from the precursor. 3 cysteine pairs are disulfide-bonded: Cys-48–Cys-62, Cys-55–Cys-66, and Cys-61–Cys-70. Glu-56 carries the 4-carboxyglutamate modification. Position 58 is a 4-hydroxyproline (Pro-58). A Serine amide modification is found at Ser-71.

Brominated at one of the Trp residues. Expressed by the venom duct.

It localises to the secreted. The chain is Conotoxin Gla(2)-TxVI/B from Conus textile (Cloth-of-gold cone).